Consider the following 221-residue polypeptide: 2,3-bisphosphoglycerate-dependent phosphoglycerate mutase (221 aa).

Residues 8-15 (RHGNSLWN), 21-22 (TG), arginine 60, 87-90 (ERHY), lysine 98, 114-115 (RR), and 174-175 (GN) each bind substrate. The active-site Tele-phosphohistidine intermediate is the histidine 9. Residue glutamate 87 is the Proton donor/acceptor of the active site. Positions 114–140 (RRGYDTPPPPLHSQADDPRYEEPPPLS) are disordered.

The protein belongs to the phosphoglycerate mutase family. BPG-dependent PGAM subfamily.

The catalysed reaction is (2R)-2-phosphoglycerate = (2R)-3-phosphoglycerate. It functions in the pathway carbohydrate degradation; glycolysis; pyruvate from D-glyceraldehyde 3-phosphate: step 3/5. Catalyzes the interconversion of 2-phosphoglycerate and 3-phosphoglycerate. The protein is 2,3-bisphosphoglycerate-dependent phosphoglycerate mutase of Tropheryma whipplei (strain TW08/27) (Whipple's bacillus).